The primary structure comprises 388 residues: Cell adhesion molecule 4 (388 aa).

A signal peptide spans methionine 1–glycine 20. Residues proline 21 to threonine 119 enclose the Ig-like V-type domain. Topologically, residues proline 21 to alanine 324 are extracellular. N-linked (GlcNAc...) asparagine glycosylation is found at asparagine 31 and asparagine 67. Disulfide bonds link cysteine 44–cysteine 104, cysteine 145–cysteine 199, and cysteine 245–cysteine 291. 2 consecutive Ig-like C2-type domains span residues proline 124–aspartate 219 and proline 224–valine 307. An N-linked (GlcNAc...) asparagine glycan is attached at asparagine 286. A helical transmembrane segment spans residues isoleucine 325 to valine 345. Over tryptophan 346–isoleucine 388 the chain is Cytoplasmic. Serine 361 is modified (phosphoserine).

It belongs to the nectin family. In terms of assembly, monomer and homodimer. In terms of processing, N-glycosylated. In terms of tissue distribution, expressed in brain, prostate, brain, kidney and some other organs.

It is found in the membrane. Its function is as follows. Involved in the cell-cell adhesion. Has calcium- and magnesium-independent cell-cell adhesion activity. May have tumor-suppressor activity. This is Cell adhesion molecule 4 (CADM4) from Homo sapiens (Human).